The following is a 119-amino-acid chain: MPRVKGGPVTRRRRKKVLKLAKGYFGAKHALYRVANQQVMKSLMYAYRDRRQRKRDFRKLWIARINAAARQNGLSYSRLMHGLKLAGVEVNRKMLADLAVNDQAAFAQLADLAKANLNK.

This sequence belongs to the bacterial ribosomal protein bL20 family.

Binds directly to 23S ribosomal RNA and is necessary for the in vitro assembly process of the 50S ribosomal subunit. It is not involved in the protein synthesizing functions of that subunit. This chain is Large ribosomal subunit protein bL20, found in Geobacillus thermodenitrificans (strain NG80-2).